The sequence spans 108 residues: Large ribosomal subunit protein bL31B (108 aa).

The disordered stretch occupies residues 86–108 (KPETVVEDVLPKGKKKSPAKKKK). Residues 97-108 (KGKKKSPAKKKK) are compositionally biased toward basic residues.

It belongs to the bacterial ribosomal protein bL31 family. Type B subfamily. Part of the 50S ribosomal subunit.

This chain is Large ribosomal subunit protein bL31B, found in Chlamydia trachomatis serovar L2 (strain ATCC VR-902B / DSM 19102 / 434/Bu).